The sequence spans 515 residues: Gamma aminobutyrate transaminase 1, mitochondrial (515 aa).

Residues 1–57 (MAKISRLFGSTVKAAITAQAGFHGKRIPAVSSLQEHIVKSTPARYNSTQACLENDIS) constitute a mitochondrion transit peptide. 172–173 (GS) provides a ligand contact to pyridoxal 5'-phosphate. Position 205 (Tyr-205) interacts with substrate. Asp-312 serves as a coordination point for pyridoxal 5'-phosphate. Position 341 (Lys-341) interacts with substrate. At Lys-341 the chain carries N6-(pyridoxal phosphate)lysine.

This sequence belongs to the class-III pyridoxal-phosphate-dependent aminotransferase family. As to expression, expressed in leaves, roots, stems, flowers and fruits.

Its subcellular location is the mitochondrion. It carries out the reaction 4-aminobutanoate + pyruvate = succinate semialdehyde + L-alanine. The enzyme catalyses 4-aminobutanoate + glyoxylate = succinate semialdehyde + glycine. Its function is as follows. Transaminase that degrades gamma-amino butyric acid (GABA) and uses pyruvate or glyoxylate as amino-group acceptor. Cannot use beta-alanine, ornithine, acetylornithine, serine, glycine, asparagine, glutamine, glutamate, valine, leucine, isoleucine, methionine, phenylalanine, histidine, lysine, arginine, aspartate, threonine, tyrosine, tryptophan, proline, or cysteine as amino donors. Acts predominantly in vegetative tissues. The polypeptide is Gamma aminobutyrate transaminase 1, mitochondrial (GABA-TP1) (Solanum lycopersicum (Tomato)).